A 437-amino-acid chain; its full sequence is Trigger factor (437 aa).

Positions 163–248 (GDIAVINFEG…LNQIKAKVLP (86 aa)) constitute a PPIase FKBP-type domain.

The protein belongs to the FKBP-type PPIase family. Tig subfamily.

Its subcellular location is the cytoplasm. The enzyme catalyses [protein]-peptidylproline (omega=180) = [protein]-peptidylproline (omega=0). Its function is as follows. Involved in protein export. Acts as a chaperone by maintaining the newly synthesized protein in an open conformation. Functions as a peptidyl-prolyl cis-trans isomerase. In Bdellovibrio bacteriovorus (strain ATCC 15356 / DSM 50701 / NCIMB 9529 / HD100), this protein is Trigger factor.